Reading from the N-terminus, the 320-residue chain is GTP 3',8-cyclase (320 aa).

The Radical SAM core domain maps to 4–226 (TFQRSINYMR…PIITDATSPA (223 aa)). GTP is bound at residue Arg-13. [4Fe-4S] cluster contacts are provided by Cys-20 and Cys-24. Tyr-26 lines the S-adenosyl-L-methionine pocket. [4Fe-4S] cluster is bound at residue Cys-27. Arg-63 contacts GTP. Position 67 (Gly-67) interacts with S-adenosyl-L-methionine. GTP is bound at residue Thr-94. An S-adenosyl-L-methionine-binding site is contributed by Ser-118. Lys-155 is a GTP binding site. S-adenosyl-L-methionine is bound at residue Met-189. [4Fe-4S] cluster is bound by residues Cys-249 and Cys-252. Position 254–256 (254–256 (RIR)) interacts with GTP. Residue Cys-266 coordinates [4Fe-4S] cluster.

This sequence belongs to the radical SAM superfamily. MoaA family. Monomer and homodimer. It depends on [4Fe-4S] cluster as a cofactor.

It carries out the reaction GTP + AH2 + S-adenosyl-L-methionine = (8S)-3',8-cyclo-7,8-dihydroguanosine 5'-triphosphate + 5'-deoxyadenosine + L-methionine + A + H(+). It participates in cofactor biosynthesis; molybdopterin biosynthesis. Catalyzes the cyclization of GTP to (8S)-3',8-cyclo-7,8-dihydroguanosine 5'-triphosphate. The polypeptide is GTP 3',8-cyclase (Alkaliphilus metalliredigens (strain QYMF)).